We begin with the raw amino-acid sequence, 398 residues long: Energy-coupling factor transporter ATP-binding protein EcfA2 (398 aa).

The region spanning 5–240 is the ABC transporter domain; the sequence is IELKDLEYAY…KELVRRARLK (236 aa). 38–45 is a binding site for ATP; the sequence is GSNGAGKS.

This sequence belongs to the ABC transporter superfamily. Energy-coupling factor EcfA family. In terms of assembly, forms a stable energy-coupling factor (ECF) transporter complex composed of 2 membrane-embedded substrate-binding proteins (S component), 2 ATP-binding proteins (A component) and 2 transmembrane proteins (T component).

The protein localises to the cell membrane. Its function is as follows. ATP-binding (A) component of a common energy-coupling factor (ECF) ABC-transporter complex. Unlike classic ABC transporters this ECF transporter provides the energy necessary to transport a number of different substrates. In Methanospirillum hungatei JF-1 (strain ATCC 27890 / DSM 864 / NBRC 100397 / JF-1), this protein is Energy-coupling factor transporter ATP-binding protein EcfA2.